Reading from the N-terminus, the 182-residue chain is Alpha-S2-casein (182 aa).

The N-terminal stretch at 1–15 is a signal peptide; the sequence is MKFFIFTCLLAVALA. Residues serine 22, serine 23, and serine 24 each carry the phosphoserine modification.

This sequence belongs to the alpha-casein family. As to expression, mammary gland specific. Secreted in milk.

The protein resides in the secreted. Functionally, important role in the capacity of milk to transport calcium phosphate. The chain is Alpha-S2-casein (CSN1S2) from Oryctolagus cuniculus (Rabbit).